The primary structure comprises 488 residues: N-acyl-D-glutamate deacylase (488 aa).

Belongs to the metallo-dependent hydrolases superfamily. N-acyl-D-amino-acid deacylase family. Zn(2+) serves as cofactor.

The protein resides in the cytoplasm. It carries out the reaction an N-acyl-D-glutamate + H2O = D-glutamate + a carboxylate. Its activity is regulated as follows. Inhibited by cobalt, copper and EDTA. The protein is N-acyl-D-glutamate deacylase of Alcaligenes xylosoxydans xylosoxydans (Achromobacter xylosoxidans).